The following is a 67-amino-acid chain: Large ribosomal subunit protein bL35 (67 aa).

This sequence belongs to the bacterial ribosomal protein bL35 family.

The sequence is that of Large ribosomal subunit protein bL35 from Brachyspira hyodysenteriae (strain ATCC 49526 / WA1).